A 415-amino-acid polypeptide reads, in one-letter code: Probable cytosolic iron-sulfur protein assembly protein 1 (415 aa).

The stretch at 9–48 is one WD 1 repeat; the sequence is AHDDKVWSLSSHPTLPLLATASTDKCSNIYRLSCSNASSS. The segment at 45-70 is disordered; sequence ASSSSSSSSPPSPPSPPSSSSPRRNF. Positions 54–63 are enriched in pro residues; it reads PPSPPSPPSS. WD repeat units lie at residues 79–131, 160–200, 207–246, 253–300, 335–374, and 380–415; these read THRR…DDNT, GHEN…EEFE, DHTQ…DEWS, GHEG…GFNG, IHTH…WEVE, and AHGV…IWEV.

It belongs to the WD repeat CIA1 family. Interacts with NAR1.

The protein resides in the cytoplasm. It is found in the nucleus. In terms of biological role, essential component of the cytosolic iron-sulfur (Fe/S) protein assembly machinery. Required for the maturation of extramitochondrial Fe/S proteins. This is Probable cytosolic iron-sulfur protein assembly protein 1 from Lodderomyces elongisporus (strain ATCC 11503 / CBS 2605 / JCM 1781 / NBRC 1676 / NRRL YB-4239) (Yeast).